A 363-amino-acid polypeptide reads, in one-letter code: tRNA(Met) cytidine acetate ligase (363 aa).

ATP contacts are provided by residues 7-20 (IAEF…HKYL), glycine 96, asparagine 152, and arginine 175.

It belongs to the TmcAL family.

It is found in the cytoplasm. It catalyses the reaction cytidine(34) in elongator tRNA(Met) + acetate + ATP = N(4)-acetylcytidine(34) in elongator tRNA(Met) + AMP + diphosphate. In terms of biological role, catalyzes the formation of N(4)-acetylcytidine (ac(4)C) at the wobble position of elongator tRNA(Met), using acetate and ATP as substrates. First activates an acetate ion to form acetyladenylate (Ac-AMP) and then transfers the acetyl group to tRNA to form ac(4)C34. In Streptococcus thermophilus (strain CNRZ 1066), this protein is tRNA(Met) cytidine acetate ligase.